The sequence spans 101 residues: MTFPLEKALDVMVSTFHKYSGKEGDKFKLNRSELKELLMRELPSFLGKRTDEAAFQKLMSNLDSNRDNEVDFQEYCVFLSCVAMMCNEFFEGFPDKQPRKK.

Residue Lys-7 is modified to N6-acetyllysine. EF-hand domains lie at 12-47 (MVST…SFLG) and 50-85 (TDEA…VAMM). Ca(2+) is bound by residues Lys-28 and Glu-33. An N6-acetyllysine modification is found at Lys-35. Ca(2+) is bound by residues Asp-63, Asn-65, Asp-67, Glu-69, and Glu-74.

It belongs to the S-100 family. As to quaternary structure, homodimer. Interacts with PPFIBP1 in a calcium-dependent mode. Interacts with PGLYRP1; this complex acts as a chemoattractant that promotes lymphocyte movement. Interacts with MYH9; this interaction increases cell motility. Interacts with Annexin 2/ANXA2. Interacts with TP53; this interaction promotes TP53 degradation. Interacts with CCR5 and CXCR3. Interacts with FCGR3A; this interaction inhibits PKC-dependent phosphorylation of FCGR3A.

The protein resides in the secreted. It is found in the nucleus. The protein localises to the cytoplasm. Functionally, calcium-binding protein that plays a role in various cellular processes including motility, angiogenesis, cell differentiation, apoptosis, and autophagy. Increases cell motility and invasiveness by interacting with non-muscle myosin heavy chain (NMMHC) IIA/MYH9. Mechanistically, promotes filament depolymerization and increases the amount of soluble myosin-IIA, resulting in the formation of stable protrusions facilitating chemotaxis. Also modulates the pro-apoptotic function of TP53 by binding to its C-terminal transactivation domain within the nucleus and reducing its protein levels. Within the extracellular space, stimulates cytokine production including granulocyte colony-stimulating factor and CCL24 from T-lymphocytes. In addition, stimulates T-lymphocyte chemotaxis by acting as a chemoattractant complex with PGLYRP1 that promotes lymphocyte migration via CCR5 and CXCR3 receptors. The sequence is that of Protein S100-A4 (S100A4) from Canis lupus familiaris (Dog).